Consider the following 919-residue polypeptide: MGANSRVNDDEAMPLTGHGAGSRDSIDSSSTASISLTLVDGASHTATEPSKSTNGHKSHTEGSYVNEKYHDSEEESWREDGYVPSGGKPAQRRTRIVFWLLVALCVGGWAMAFIIMATSPNNRHSTSDSSSGGSESEIVKPNTPHDGKKIPLDDVLGGMWGPVEHTISWISGPKGEDGLLLQKSEGGIGPYLHIEDVRNIHGMRANNNSIVLMKESVFFVNDERISPEKVWPSPDLKTVLAMTREKKNWRHSFTGLYWLFDVETQTAQPLDPEAPNGRVQLASWSPTSDAVVFTRDNNIYIRNLTSKAVKPITTDGGANLFYGIPDWVYEEEVFEGNSATWWSLDGKYISFLRTNETMVPEFPIDFYLSRPPGYTPEPGEEAYPYVQQIKYPKAGAPNPTVNLQFYDVEREESFSVNVDNNLKDDDRIIAEVIPASGGKMLVRETNRESYIVKVTVIDAAKREGKMVRSDNVDEIDGGWVEPSHSTTYIPSDPSAGRPHDGYIDTIIHEGYNHLAYFTPVENPKPMMLTTGNWEVVDAPSGVDLKNNVVYFVATKESPIDRHVYSVKLDGSELQMLNDSEKSAYYDVSFSNGAGYMLLKYQGPNIPWQKLISSPSNEDFYDEIIEENKNLARLSNEFSLPSLHYSTITVDGFKLPVVERRPPNFNETKKYPVLFHLYGGPGSQTVNKKFTVNFQTYVASNLGYLVVTVDGRGTGFNGRKFRCIVRRNLGYYEAHDQIQTAKEWGKKPYVDKTRIAIWGWSYGGFMTLKTLEQDAGETFQYGMAVAPVTDWRFYDSVYTERYMHMPQHNTEGYENASISNATSLSQNTRFLIMHGSADDNVHFQNTLTLLDKLDIMGMHNYDVHVFPDSNHGIYFHHAYKMVHQRLSDWLVNAFNGEWVRLRNPKPSGLKRVIRRLLHFG.

Residues 1–89 (MGANSRVNDD…DGYVPSGGKP (89 aa)) are disordered. Residues 1–95 (MGANSRVNDD…GGKPAQRRTR (95 aa)) are Cytoplasmic-facing. The segment covering 27-38 (DSSSTASISLTL) has biased composition (low complexity). The segment covering 44–55 (HTATEPSKSTNG) has biased composition (polar residues). A helical; Signal-anchor for type II membrane protein membrane pass occupies residues 96–116 (IVFWLLVALCVGGWAMAFIIM). The Vacuolar portion of the chain corresponds to 117–919 (ATSPNNRHST…RVIRRLLHFG (803 aa)). The interval 121–150 (NNRHSTSDSSSGGSESEIVKPNTPHDGKKI) is disordered. Positions 127–136 (SDSSSGGSES) are enriched in low complexity. 5 N-linked (GlcNAc...) asparagine glycosylation sites follow: N207, N303, N355, N577, and N665. The active-site Charge relay system is S760. N-linked (GlcNAc...) asparagine glycans are attached at residues N814 and N819. Active-site charge relay system residues include D837 and H870.

Belongs to the peptidase S9B family.

The protein localises to the vacuole membrane. The enzyme catalyses Release of an N-terminal dipeptide, Xaa-Yaa-|-Zaa-, from a polypeptide, preferentially when Yaa is Pro, provided Zaa is neither Pro nor hydroxyproline.. In terms of biological role, type IV dipeptidyl-peptidase which removes N-terminal dipeptides sequentially from polypeptides having unsubstituted N-termini provided that the penultimate residue is proline. The protein is Probable dipeptidyl-aminopeptidase B (DAPB) of Arthroderma otae (strain ATCC MYA-4605 / CBS 113480) (Microsporum canis).